The sequence spans 278 residues: Putative phosphoenolpyruvate synthase regulatory protein (278 aa).

Residue 157–164 coordinates ADP; sequence GVSRSGKT.

The protein belongs to the pyruvate, phosphate/water dikinase regulatory protein family. PSRP subfamily.

The catalysed reaction is [pyruvate, water dikinase] + ADP = [pyruvate, water dikinase]-phosphate + AMP + H(+). It catalyses the reaction [pyruvate, water dikinase]-phosphate + phosphate + H(+) = [pyruvate, water dikinase] + diphosphate. Bifunctional serine/threonine kinase and phosphorylase involved in the regulation of the phosphoenolpyruvate synthase (PEPS) by catalyzing its phosphorylation/dephosphorylation. The chain is Putative phosphoenolpyruvate synthase regulatory protein from Vibrio parahaemolyticus serotype O3:K6 (strain RIMD 2210633).